The chain runs to 567 residues: Probable serine/threonine-protein kinase WNK6 (567 aa).

The Protein kinase domain occupies isoleucine 28–leucine 285. Residues threonine 108 to phenylalanine 111 and lysine 158 contribute to the ATP site. Aspartate 175 functions as the Proton acceptor in the catalytic mechanism. Residues valine 499–serine 509 are compositionally biased toward basic and acidic residues. The interval valine 499–leucine 528 is disordered. The span at glutamate 512–glutamate 525 shows a compositional bias: acidic residues. Positions proline 519–alanine 553 form a coiled coil.

Belongs to the protein kinase superfamily. Ser/Thr protein kinase family. WNK subfamily.

The catalysed reaction is L-seryl-[protein] + ATP = O-phospho-L-seryl-[protein] + ADP + H(+). The enzyme catalyses L-threonyl-[protein] + ATP = O-phospho-L-threonyl-[protein] + ADP + H(+). In terms of biological role, may regulate flowering time by modulating the photoperiod pathway. This Arabidopsis thaliana (Mouse-ear cress) protein is Probable serine/threonine-protein kinase WNK6 (WNK6).